We begin with the raw amino-acid sequence, 282 residues long: Bis(5'-nucleosyl)-tetraphosphatase, symmetrical (282 aa).

It belongs to the Ap4A hydrolase family.

It catalyses the reaction P(1),P(4)-bis(5'-adenosyl) tetraphosphate + H2O = 2 ADP + 2 H(+). Hydrolyzes diadenosine 5',5'''-P1,P4-tetraphosphate to yield ADP. The protein is Bis(5'-nucleosyl)-tetraphosphatase, symmetrical of Sodalis glossinidius (strain morsitans).